A 324-amino-acid polypeptide reads, in one-letter code: Casein kinase I (324 aa).

One can recognise a Protein kinase domain in the interval 9–278 (YALGKKLGSG…LRRLLKDLFI (270 aa)). ATP-binding positions include 15–23 (LGSGSFGDI) and Lys38. Asp128 acts as the Proton acceptor in catalysis.

This sequence belongs to the protein kinase superfamily. CK1 Ser/Thr protein kinase family. Casein kinase I subfamily. Interacts with rhoptry protein RON3; the interaction is direct. Interacts with CK2alpha; the interaction is direct. Interacts with nucleosome assembly protein NAPL. Interacts with RAB5b. Interacts with host GAPVD1. Interacts with host SNX22. It depends on Mg(2+) as a cofactor.

It is found in the cytoplasm. The protein resides in the cytoplasmic vesicle. Its subcellular location is the secretory vesicle. The protein localises to the microneme. It localises to the secreted. It is found in the host cell surface. The catalysed reaction is L-seryl-[protein] + ATP = O-phospho-L-seryl-[protein] + ADP + H(+). It carries out the reaction L-threonyl-[protein] + ATP = O-phospho-L-threonyl-[protein] + ADP + H(+). Functionally, serine/threonine-protein kinase likely to be involved in many cellular processes. Phosphorylates rhoptry protein RON3, nucleosome assembly protein NAPL and DNA/RNA-binding protein ALBA4 in vitro. The chain is Casein kinase I from Plasmodium falciparum (isolate Dd2).